Here is a 157-residue protein sequence, read N- to C-terminus: 2-C-methyl-D-erythritol 2,4-cyclodiphosphate synthase (157 aa).

2 residues coordinate a divalent metal cation: aspartate 8 and histidine 10. Residues 8-10 and 34-35 each bind 4-CDP-2-C-methyl-D-erythritol 2-phosphate; these read DVH and HS. Histidine 42 is an a divalent metal cation binding site. 4-CDP-2-C-methyl-D-erythritol 2-phosphate contacts are provided by residues 56 to 58, 61 to 65, 100 to 106, 132 to 135, phenylalanine 139, and arginine 142; these read DIG, FPDTD, AQAPKMA, and TTTE.

This sequence belongs to the IspF family. As to quaternary structure, homotrimer. Requires a divalent metal cation as cofactor.

The catalysed reaction is 4-CDP-2-C-methyl-D-erythritol 2-phosphate = 2-C-methyl-D-erythritol 2,4-cyclic diphosphate + CMP. Its pathway is isoprenoid biosynthesis; isopentenyl diphosphate biosynthesis via DXP pathway; isopentenyl diphosphate from 1-deoxy-D-xylulose 5-phosphate: step 4/6. Its function is as follows. Involved in the biosynthesis of isopentenyl diphosphate (IPP) and dimethylallyl diphosphate (DMAPP), two major building blocks of isoprenoid compounds. Catalyzes the conversion of 4-diphosphocytidyl-2-C-methyl-D-erythritol 2-phosphate (CDP-ME2P) to 2-C-methyl-D-erythritol 2,4-cyclodiphosphate (ME-CPP) with a corresponding release of cytidine 5-monophosphate (CMP). In Pseudomonas fluorescens (strain Pf0-1), this protein is 2-C-methyl-D-erythritol 2,4-cyclodiphosphate synthase.